We begin with the raw amino-acid sequence, 116 residues long: Antimicrobial peptide 1b (116 aa).

An N-terminal signal peptide occupies residues 1–34 (MKPHMSATVLRAPRVAAILLAVVLAAVLATAVNG). The 43-residue stretch at 35–77 (AQRCGDQARGAKCPNCLCCGKYGFCGSGDAYCGAGSCQSQCRG) folds into the Chitin-binding type-1 domain. Disulfide bonds link cysteine 38/cysteine 53, cysteine 47/cysteine 59, cysteine 50/cysteine 78, cysteine 52/cysteine 66, and cysteine 71/cysteine 75. Residues 80–116 (DDVVGQALPAEPGSTRATAASSASARGLNLTATTGGP) constitute a propeptide that is removed on maturation. Residues 89–116 (AEPGSTRATAASSASARGLNLTATTGGP) form a disordered region. A compositionally biased stretch (low complexity) spans 93–105 (STRATAASSASAR).

Binds chitin. Has antifungal activity against the fungi F.solani (IC(50)=5 ug/ml), F.verticillioides (IC(50)=30 ug/ml), F.oxysporum (IC(50)=5 ug/ml), B.sorokiniana (IC(50)=5 ug/ml), B.cinerea (IC(50)=20 ug/ml) and N.crassa (IC(50)=10 ug/ml). Inhibits hyphal elongation and causes browning of hyphae in F.oxysporum. Causes destruction and discoloration of spores in B.sorokiniana. Inhibits the development of disease caused by the fungus P.infestans on potato tubers. Has antibacterial activity against the Gram-negative bacteria P.syringae and E.carotovora, and the Gram-positive bacterium C.michiganensis. Functionally, has antifungal activity against F.verticillioides (IC(50)=2.7 ug/ml). At concentrations between 45 uM and 225 uM, inhibits activity of metalloproteinase fungalysin Fv-cpm from F.verticillioides. The protein is Antimicrobial peptide 1b of Triticum kiharae (Wheat).